A 64-amino-acid polypeptide reads, in one-letter code: Large ribosomal subunit protein bL35 (64 aa).

It belongs to the bacterial ribosomal protein bL35 family.

The sequence is that of Large ribosomal subunit protein bL35 from Ureaplasma urealyticum serovar 10 (strain ATCC 33699 / Western).